We begin with the raw amino-acid sequence, 602 residues long: Sodium- and chloride-dependent GABA transporter 2 (602 aa).

Over 1–40 (MDNRVSGTTSNGETKPVCPVMEKVEEDGTLEREQWTNKME) the chain is Cytoplasmic. 3 consecutive transmembrane segments (helical) span residues 41–61 (FVLSVAGEIIGLGNVWRFPYL), 68–88 (GAFFIPYLIFLFTCGIPVFFL), and 121–141 (IVSLLNVYYIVVLAWALFYLF). Residues 142–206 (SSFTTDLPWG…GIQHLGSLRW (65 aa)) lie on the Extracellular side of the membrane. The cysteines at positions 153 and 162 are disulfide-linked. Residues asparagine 169, asparagine 173, and asparagine 178 are each glycosylated (N-linked (GlcNAc...) asparagine). 2 helical membrane passes run 207 to 227 (ELVLCLLLAWIICYFCIWKGV) and 233 to 253 (VVYFTATFPYLMLVVLLIRGV). Asparagine 269 is a glycosylation site (N-linked (GlcNAc...) asparagine). Transmembrane regions (helical) follow at residues 282–302 (AGTQIFFSFAICLGCLTALGS), 319–339 (ILNSSTSFVAGFAIFSILGFM), 366–386 (VVMLPFSPLWACCFFFMVVLL), 418–438 (ILILIVSVVSFFIGLIMLTEG), 453–473 (GMCLLFVAIFESLCVAWVYGA), 490–510 (PLIKYCWLFFTPAVCLATFLF), and 528–548 (WWGDALGWLLALSSMVCIPAW). The Cytoplasmic segment spans residues 549–602 (SIYKLRTLKGPLRERLRQLVCPAEDLPQKSQPELTSPATPMTSLLRLTELESNC). A Phosphothreonine modification is found at threonine 587. Residue serine 591 is modified to Phosphoserine.

It belongs to the sodium:neurotransmitter symporter (SNF) (TC 2.A.22) family. SLC6A13 subfamily. In terms of tissue distribution, brain, retina, and peripheral tissues. Expressed in hepatocytes (at protein level).

The protein localises to the cell membrane. Its subcellular location is the basolateral cell membrane. It catalyses the reaction 4-aminobutanoate(out) + chloride(out) + 2 Na(+)(out) = 4-aminobutanoate(in) + chloride(in) + 2 Na(+)(in). The catalysed reaction is taurine(out) + chloride(out) + 2 Na(+)(out) = taurine(in) + chloride(in) + 2 Na(+)(in). The enzyme catalyses beta-alanine(out) + chloride(out) + 2 Na(+)(out) = beta-alanine(in) + chloride(in) + 2 Na(+)(in). It carries out the reaction hypotaurine(out) + chloride(out) + 2 Na(+)(out) = hypotaurine(in) + chloride(in) + 2 Na(+)(in). GABA transport is inhibited by beta-alanine, L-2,4-Diaminobutyric acid, hypotaurine and nipecotic acid. Taurine transport is inhibited by hypotaurine, beta-alanine and nipecotic acid. Its function is as follows. Mediates sodium- and chloride-dependent transport of gamma-aminobutyric acid (GABA). Mediates transport of taurine and is the major taurine transporter in hepatocytes. Can also mediate transport of beta-alanine and hypotaurine. This chain is Sodium- and chloride-dependent GABA transporter 2 (Slc6a13), found in Rattus norvegicus (Rat).